Here is a 338-residue protein sequence, read N- to C-terminus: Solute carrier family 35 member G3 (338 aa).

The segment at 1 to 24 (MAGSHPYFNQPDSTHPSPPSAPPS) is disordered. 9 helical membrane passes run 37–57 (TSGLLVALLGGGLPAGFVGPL), 67–87 (LPSLELLIWRCLFHLPIALLL), 105–125 (FFCALLNILSIGCAYSAVQVV), 160–180 (CGLLGCILGLIIIVGPGLWTL), 190–210 (ALGYAEAFLGGRALSLGLLVY), 221–241 (TVAFLSGLVGLLGSVPGLFVL), 250–270 (LLSWSCVGAVGILALVSFTCV), 281–301 (LVCAVLHSEVVVALILQYYML), and 305–325 (VAPSDIMGAGVALGSIAIITA). In terms of domain architecture, EamA 1 spans 49–174 (LPAGFVGPLS…CILGLIIIVG (126 aa)). In terms of domain architecture, EamA 2 spans 272–325 (YAVTKAHPALVCAVLHSEVVVALILQYYMLHETVAPSDIMGAGVALGSIAIITA).

It belongs to the SLC35G solute transporter family.

Its subcellular location is the membrane. The protein is Solute carrier family 35 member G3 (SLC35G3) of Pan paniscus (Pygmy chimpanzee).